The sequence spans 83 residues: Cytochrome b559 subunit alpha (83 aa).

A helical membrane pass occupies residues 21-35; it reads VIHSITIPSLFIAGW. H23 serves as a coordination point for heme.

It belongs to the PsbE/PsbF family. In terms of assembly, heterodimer of an alpha subunit and a beta subunit. PSII is composed of 1 copy each of membrane proteins PsbA, PsbB, PsbC, PsbD, PsbE, PsbF, PsbH, PsbI, PsbJ, PsbK, PsbL, PsbM, PsbT, PsbX, PsbY, PsbZ, Psb30/Ycf12, at least 3 peripheral proteins of the oxygen-evolving complex and a large number of cofactors. It forms dimeric complexes. Heme b is required as a cofactor.

The protein localises to the plastid. It is found in the chloroplast thylakoid membrane. In terms of biological role, this b-type cytochrome is tightly associated with the reaction center of photosystem II (PSII). PSII is a light-driven water:plastoquinone oxidoreductase that uses light energy to abstract electrons from H(2)O, generating O(2) and a proton gradient subsequently used for ATP formation. It consists of a core antenna complex that captures photons, and an electron transfer chain that converts photonic excitation into a charge separation. The chain is Cytochrome b559 subunit alpha from Phalaenopsis aphrodite subsp. formosana (Moth orchid).